We begin with the raw amino-acid sequence, 590 residues long: Cytosolic Fe-S cluster assembly factor nar1 (590 aa).

Position 20 (Cys-20) interacts with [4Fe-4S] cluster. Residues 25–50 are disordered; the sequence is ESLPQKQSNENPYEVTTEDKVQPENP. Cys-60, Cys-63, Cys-66, Cys-204, and Cys-259 together coordinate [4Fe-4S] cluster. Residues 423 to 446 are disordered; it reads PGAKVATGQTAGGRRQPISRNGAS. Residues Cys-461 and Cys-465 each contribute to the [4Fe-4S] cluster site.

This sequence belongs to the NARF family.

Component of the cytosolic Fe/S protein assembly machinery. Required for maturation of extramitochondrial Fe/S proteins. May play a role in the transfer of pre-assembled Fe/S clusters to target apoproteins. This chain is Cytosolic Fe-S cluster assembly factor nar1 (nar1), found in Emericella nidulans (strain FGSC A4 / ATCC 38163 / CBS 112.46 / NRRL 194 / M139) (Aspergillus nidulans).